The sequence spans 310 residues: Beta-ketoacyl-[acyl-carrier-protein] synthase III (310 aa).

Catalysis depends on residues Cys-116 and His-239. The segment at 240-244 is ACP-binding; the sequence is QANYR. Asn-269 is a catalytic residue.

It belongs to the thiolase-like superfamily. FabH family. As to quaternary structure, homodimer.

The protein resides in the cytoplasm. It carries out the reaction malonyl-[ACP] + acetyl-CoA + H(+) = 3-oxobutanoyl-[ACP] + CO2 + CoA. Its pathway is lipid metabolism; fatty acid biosynthesis. Catalyzes the condensation reaction of fatty acid synthesis by the addition to an acyl acceptor of two carbons from malonyl-ACP. Catalyzes the first condensation reaction which initiates fatty acid synthesis and may therefore play a role in governing the total rate of fatty acid production. Possesses both acetoacetyl-ACP synthase and acetyl transacylase activities. Its substrate specificity determines the biosynthesis of branched-chain and/or straight-chain of fatty acids. This is Beta-ketoacyl-[acyl-carrier-protein] synthase III from Acholeplasma laidlawii (strain PG-8A).